The following is a 159-amino-acid chain: Style cell-cycle inhibitor 1 (159 aa).

Residues 1–86 (MVSERSSKEK…SDHKLKEGIP (86 aa)) are disordered. Over residues 15–50 (ARSEDSSSSDYEEKVKRHRGTEKDDERRSRRSDKKD) the composition is skewed to basic and acidic residues. The segment covering 51–63 (KKSHKHHKSSTSK) has biased composition (basic residues). A compositionally biased stretch (basic and acidic residues) spans 64-85 (KSKDDKPKKKHTESDHKLKEGI).

Its subcellular location is the nucleus. Functionally, component of the auxin signaling transduction pathway that regulates cell proliferation and differentiation during flowers stigmas and styles development. Involved in the regulation of auxin-related genes. The chain is Style cell-cycle inhibitor 1 from Arabidopsis thaliana (Mouse-ear cress).